The sequence spans 230 residues: Ribonuclease 3 (230 aa).

An RNase III domain is found at 1–134; the sequence is MKQLEELLST…FLGALLLDKG (134 aa). Glutamate 47 contributes to the Mg(2+) binding site. Residue aspartate 51 is part of the active site. Residues aspartate 120 and glutamate 123 each coordinate Mg(2+). The active site involves glutamate 123. One can recognise a DRBM domain in the interval 160-229; sequence DYKTCLQEFL…AKNALAQLSE (70 aa).

This sequence belongs to the ribonuclease III family. As to quaternary structure, homodimer. Mg(2+) is required as a cofactor.

It localises to the cytoplasm. The enzyme catalyses Endonucleolytic cleavage to 5'-phosphomonoester.. Functionally, digests double-stranded RNA. Involved in the processing of primary rRNA transcript to yield the immediate precursors to the large and small rRNAs (23S and 16S). Processes some mRNAs, and tRNAs when they are encoded in the rRNA operon. Processes pre-crRNA and tracrRNA of type II CRISPR loci if present in the organism. In Streptococcus pyogenes serotype M49 (strain NZ131), this protein is Ribonuclease 3.